A 1445-amino-acid polypeptide reads, in one-letter code: Spermatogenesis-associated protein 31E1 (1445 aa).

A helical transmembrane segment spans residues 64-84 (WMMDFILTSVCGLVLLFLLLL). Disordered stretches follow at residues 90–115 (PPSP…SRSR) and 169–262 (VPAK…PDSS). Residues 101 to 110 (SREPQRERSG) show a composition bias toward basic and acidic residues. The span at 241 to 260 (VFPPSPQPHGPLASSPPPPD) shows a compositional bias: pro residues. Asn-408 is a glycosylation site (N-linked (GlcNAc...) asparagine). 4 disordered regions span residues 411–430 (TQPQ…TVGN), 460–557 (NPSS…ERTQ), 592–619 (LSQP…PGVV), and 637–761 (QEQS…KEHL). Over residues 664-681 (PQSQAEDTQQALLPSQPS) the composition is skewed to polar residues. 3 N-linked (GlcNAc...) asparagine glycosylation sites follow: Asn-819, Asn-906, and Asn-1160. 4 disordered regions span residues 894 to 966 (FLGK…TCSL), 1143 to 1242 (RLPT…IGDK), 1254 to 1280 (KGQT…RKGG), and 1378 to 1445 (SPKA…CLAS). Composition is skewed to polar residues over residues 906-915 (NRTTSKSVPT) and 1148-1165 (APLS…TASQ). The span at 1202–1217 (DKGEAHRRPRTGEQGH) shows a compositional bias: basic and acidic residues.

Belongs to the SPATA31 family.

The protein localises to the membrane. In terms of biological role, may play a role in spermatogenesis. This Homo sapiens (Human) protein is Spermatogenesis-associated protein 31E1 (SPATA31E1).